We begin with the raw amino-acid sequence, 382 residues long: Ribosomal RNA large subunit methyltransferase G (382 aa).

This sequence belongs to the methyltransferase superfamily. RlmG family.

The protein resides in the cytoplasm. It carries out the reaction guanosine(1835) in 23S rRNA + S-adenosyl-L-methionine = N(2)-methylguanosine(1835) in 23S rRNA + S-adenosyl-L-homocysteine + H(+). In terms of biological role, specifically methylates the guanine in position 1835 (m2G1835) of 23S rRNA. The polypeptide is Ribosomal RNA large subunit methyltransferase G (Pseudoalteromonas translucida (strain TAC 125)).